A 151-amino-acid polypeptide reads, in one-letter code: Large ribosomal subunit protein bL9 (151 aa).

It belongs to the bacterial ribosomal protein bL9 family.

Its function is as follows. Binds to the 23S rRNA. This Bordetella pertussis (strain Tohama I / ATCC BAA-589 / NCTC 13251) protein is Large ribosomal subunit protein bL9.